We begin with the raw amino-acid sequence, 166 residues long: Testis-expressed protein 51 (166 aa).

The N-terminal stretch at 1-15 is a signal peptide; it reads MLPLLIICLLPAIEG. The helical transmembrane segment at 138 to 154 threads the bilayer; it reads SLWAVSLSSALLLAIAG.

It is found in the membrane. The protein is Testis-expressed protein 51 of Homo sapiens (Human).